Reading from the N-terminus, the 800-residue chain is Putative antiporter subunit mnhA2 (800 aa).

A run of 21 helical transmembrane segments spans residues 1–21, 29–49, 78–98, 109–129, 133–153, 167–187, 209–229, 241–261, 272–292, 300–320, 336–356, 387–407, 424–444, 472–492, 528–548, 595–615, 627–647, 651–671, 676–696, 712–732, and 768–788; these read MSLVYLMATNLLFMLIVLFTL, VAGYVALIAPIVTSTYFIMKI, GLSLMFGLIISLIGVGVFFYA, LPRFFIYLLLFMFSMIGIVIA, ILMYVFWELTSISSFLLISYW, FMITVFGGLALLTGFIILYII, FIPMILMLLLGAFTKSAQFPF, TPVSAYLHSATMVKAGIFLLF, VYIYTVTFVGLITMLFGSLTA, GILAYSTISQLGMIMTMVGLG, ILVLFAGLFHLMNHAVFKCAL, IVMLLAALSMAGVPFLNGFLS, YGFVLTFVIISIGVIASILTF, PWLFSLPAVILMLLIPVIFFV, VNLPLILSIVVIIIGLILALV, IMITLFIFVAIVVYGYLTVGF, GPLEVILSVVTLIIGISLIFI, LTMVVLNGMIGFAVTLYFIAM, LALTQLVVETITTILFIVSFS, TFKIIVSLVMALTVVSLIFVA, and LDTMFEGLVLIIAGLGIYTLL.

It belongs to the CPA3 antiporters (TC 2.A.63) subunit A family. May form a heterooligomeric complex that consists of seven subunits: mnhA2, mnhB2, mnhC2, mnhD2, mnhE2, mnhF2 and mnhG2.

It localises to the cell membrane. The polypeptide is Putative antiporter subunit mnhA2 (mnhA2) (Staphylococcus epidermidis (strain ATCC 12228 / FDA PCI 1200)).